The primary structure comprises 624 residues: Bifunctional protein ArgH (624 aa).

The segment at 1–466 is argininosuccinate lyase; sequence MALWGGRFTQ…AARDTTLVKV (466 aa). An N-acetyltransferase domain is found at 464 to 614; sequence VKVRPARITD…DEVALEFNLS (151 aa). Positions 467–624 are probable acetyltransferase; the sequence is RPARITDIET…EQIISQVKVA (158 aa).

This sequence in the N-terminal section; belongs to the lyase 1 family. Argininosuccinate lyase subfamily.

The protein localises to the cytoplasm. It carries out the reaction 2-(N(omega)-L-arginino)succinate = fumarate + L-arginine. It participates in amino-acid biosynthesis; L-arginine biosynthesis; L-arginine from L-ornithine and carbamoyl phosphate: step 3/3. The protein is Bifunctional protein ArgH (argH) of Vibrio vulnificus (strain CMCP6).